The chain runs to 164 residues: CB1 cannabinoid receptor-interacting protein 1 (164 aa).

This sequence belongs to the CNRIP family. In terms of assembly, interacts with the cannabinoid receptor CNR1 (via C-terminus). Does not interact with cannabinoid receptor CNR2.

In terms of biological role, suppresses cannabinoid receptor CNR1-mediated tonic inhibition of voltage-gated calcium channels. This chain is CB1 cannabinoid receptor-interacting protein 1 (Cnrip1), found in Rattus norvegicus (Rat).